An 855-amino-acid polypeptide reads, in one-letter code: Pentatricopeptide repeat-containing protein At1g74750 (855 aa).

The tract at residues 21 to 40 (GSRPSAADGNSCTCAEDESG) is disordered. PPR repeat units lie at residues 358 to 392 (DGHTYTTMVGNLGRAKQFGEINKLLDEMVRDGCKP), 393 to 427 (NTVTYNRLIHSYGRANYLKEAMNVFNQMQEAGCEP), 428 to 462 (DRVTYCTLIDIHAKAGFLDIAMDMYQRMQEAGLSP), 463 to 497 (DTFTYSVIINCLGKAGHLPAAHRLFCEMVGQGCTP), 498 to 532 (NLVTFNIMIALHAKARNYETALKLYRDMQNAGFQP), 533 to 567 (DKVTYSIVMEVLGHCGFLEEAEGVFAEMQRKNWVP), 568 to 602 (DEPVYGLLVDLWGKAGNVDKAWQWYQAMLQAGLRP), and 603 to 637 (NVPTCNSLLSTFLRVHRMSEAYNLLQSMLALGLHP). The Smr domain occupies 755–838 (INLHVMSEGT…NSGCFVGSGE (84 aa)).

It belongs to the PPR family. P subfamily.

The chain is Pentatricopeptide repeat-containing protein At1g74750 from Arabidopsis thaliana (Mouse-ear cress).